The following is a 136-amino-acid chain: NADPH-dependent 7-cyano-7-deazaguanine reductase (136 aa).

The active-site Thioimide intermediate is the Cys-50. The active-site Proton donor is Asp-57. Substrate contacts are provided by residues 72–74 (YEL) and 91–92 (HE).

Belongs to the GTP cyclohydrolase I family. QueF type 1 subfamily.

It is found in the cytoplasm. It carries out the reaction 7-aminomethyl-7-carbaguanine + 2 NADP(+) = 7-cyano-7-deazaguanine + 2 NADPH + 3 H(+). The protein operates within tRNA modification; tRNA-queuosine biosynthesis. Its function is as follows. Catalyzes the NADPH-dependent reduction of 7-cyano-7-deazaguanine (preQ0) to 7-aminomethyl-7-deazaguanine (preQ1). The protein is NADPH-dependent 7-cyano-7-deazaguanine reductase of Prochlorococcus marinus (strain MIT 9301).